The chain runs to 351 residues: Rod outer segment membrane protein 1 (351 aa).

Residues 1 to 19 lie on the Cytoplasmic side of the membrane; that stretch reads MAPVLPLVLPLQPRIRLAQ. The chain crosses the membrane as a helical span at residues 20 to 44; sequence GLWLLSWLLALAGGVILLCSGHLLV. The Lumenal segment spans residues 45-64; that stretch reads QLRHLGTFLAPSCQFPVLPQ. The chain crosses the membrane as a helical span at residues 65-84; it reads AALAAGAVALGTGLVGVGAS. At 85–102 the chain is on the cytoplasmic side; it reads RASLNAALYPPWRGVLGP. A helical transmembrane segment spans residues 103–125; that stretch reads LLVAGTAGGGGLLVVGLGLALAL. Over 126-263 the chain is Lumenal; that stretch reads PGSLDEALEE…HEVLLEHLQD (138 aa). The chain crosses the membrane as a helical span at residues 264–286; the sequence is LAGTLGSMLAVTFLLQALVLLGL. At 287–351 the chain is on the cytoplasmic side; it reads RYLQTALEGL…APPKEDLSEA (65 aa). The interval 331–351 is disordered; sequence RPAPEEAPPGEAPPKEDLSEA.

It belongs to the PRPH2/ROM1 family. Homodimer; disulfide-linked. Forms a homotetramer. Forms a heterotetramer with PRPH2. Homotetramer and heterotetramer core complexes go on to form higher order complexes by formation of intermolecular disulfide bonds. Interacts with STX3. Interacts with SNAP25. Retina photoreceptors (at protein level). In rim region of ROS disks.

The protein localises to the photoreceptor inner segment membrane. It localises to the photoreceptor outer segment membrane. Its function is as follows. Plays a role in rod outer segment (ROS) morphogenesis. May play a role with PRPH2 in the maintenance of the structure of ROS curved disks. Plays a role in the organization of the ROS and maintenance of ROS disk diameter. Involved in the maintenance of the retina outer nuclear layer. The chain is Rod outer segment membrane protein 1 (ROM1) from Homo sapiens (Human).